The chain runs to 674 residues: Methionine--tRNA ligase (674 aa).

Positions 11–21 (PYANGDLHLGH) match the 'HIGH' region motif. Residues Cys142, Cys145, Cys155, and Cys158 each contribute to the Zn(2+) site. The short motif at 330-334 (KMSKS) is the 'KMSKS' region element. Residue Lys333 coordinates ATP. Residues 574–674 (DFMKVDLRIA…EGAQPGMRVK (101 aa)) enclose the tRNA-binding domain.

The protein belongs to the class-I aminoacyl-tRNA synthetase family. MetG type 1 subfamily. As to quaternary structure, homodimer. Zn(2+) is required as a cofactor.

Its subcellular location is the cytoplasm. It catalyses the reaction tRNA(Met) + L-methionine + ATP = L-methionyl-tRNA(Met) + AMP + diphosphate. Is required not only for elongation of protein synthesis but also for the initiation of all mRNA translation through initiator tRNA(fMet) aminoacylation. In Francisella tularensis subsp. tularensis (strain FSC 198), this protein is Methionine--tRNA ligase.